The following is a 798-amino-acid chain: Disintegrin and metalloproteinase domain-containing protein B (798 aa).

The N-terminal stretch at 1-23 (MKAFSCLLAVIATAASLFQHVDA) is a signal peptide. At 24–706 (SHARDKLNNI…VSDWVSRHKP (683 aa)) the chain is on the extracellular side. 5 N-linked (GlcNAc...) asparagine glycosylation sites follow: Asn32, Asn226, Asn227, Asn313, and Asn407. A Peptidase M12B domain is found at 271–510 (KVALIGVVAD…RTILTNCLTT (240 aa)). Cystine bridges form between Cys395–Cys495, Cys448–Cys459, and Cys580–Cys600. His431 serves as a coordination point for Zn(2+). Residue Glu432 is part of the active site. 2 residues coordinate Zn(2+): His435 and His441. Residues 519-608 (GQQCGNGIVE…DCPHDIHSKD (90 aa)) form the Disintegrin domain. The helical transmembrane segment at 707–727 (IVIGVAVGAGCLLLLAIASCI) threads the bilayer. At 728-798 (CGRSRRQRPR…PGHMPPTRYA (71 aa)) the chain is on the cytoplasmic side. Residues 734 to 798 (QRPRNRKMPP…PGHMPPTRYA (65 aa)) are disordered. Residues 775–792 (NNIPPPINAPPPAYPGHM) show a composition bias toward pro residues.

The cofactor is Zn(2+).

The protein localises to the membrane. Probable zinc protease. The chain is Disintegrin and metalloproteinase domain-containing protein B (ADM-B) from Trichophyton verrucosum (strain HKI 0517).